Consider the following 148-residue polypeptide: Protoporphyrinogen IX oxidase (148 aa).

Helical transmembrane passes span 7–27 (YFLWVKAFHVIAVISWMAALF), 59–79 (FIASPAMGFTLITGILMLLIA), 86–106 (GGWLHAKLALVVLLLIYHFYC), and 128–148 (FNEIPTILMILIVILVVVKPF). H15 is a heme binding site. Heme is bound at residue K92.

The protein belongs to the HemJ family. In terms of assembly, homodimer. The cofactor is heme b.

Its subcellular location is the cell membrane. The enzyme catalyses protoporphyrinogen IX + 3 A = protoporphyrin IX + 3 AH2. It participates in porphyrin-containing compound metabolism; protoporphyrin-IX biosynthesis; protoporphyrin-IX from protoporphyrinogen-IX: step 1/1. In terms of biological role, catalyzes the oxidation of protoporphyrinogen IX to protoporphyrin IX. Is involved in the biosynthesis of tetrapyrrole molecules like heme. Does not use oxygen or artificial electron acceptors such as menadione or benzoquinone. The chain is Protoporphyrinogen IX oxidase from Helicobacter pylori (strain J99 / ATCC 700824) (Campylobacter pylori J99).